The following is a 175-amino-acid chain: Peptide deformylase (175 aa).

Residues Cys96 and His138 each contribute to the Fe cation site. Residue Glu139 is part of the active site. His142 contributes to the Fe cation binding site.

This sequence belongs to the polypeptide deformylase family. It depends on Fe(2+) as a cofactor.

It catalyses the reaction N-terminal N-formyl-L-methionyl-[peptide] + H2O = N-terminal L-methionyl-[peptide] + formate. In terms of biological role, removes the formyl group from the N-terminal Met of newly synthesized proteins. Requires at least a dipeptide for an efficient rate of reaction. N-terminal L-methionine is a prerequisite for activity but the enzyme has broad specificity at other positions. The protein is Peptide deformylase of Rhodopseudomonas palustris (strain BisB18).